A 197-amino-acid polypeptide reads, in one-letter code: DNA helicase/primase complex protein (197 aa).

This sequence belongs to the herpesviridae UL52 family.

Its function is as follows. Involved in DNA replication. This chain is DNA helicase/primase complex protein (7), found in Equus caballus (Horse).